The primary structure comprises 2202 residues: Activating signal cointegrator 1 complex subunit 3 (2202 aa).

Positions 1–400 (MALPRLTGAL…RQRDADVEKI (400 aa)) are required for interaction with ASCC2. Serine 12 is modified (phosphoserine). Coiled-coil stretches lie at residues 18–79 (KQDN…AAKQ) and 328–356 (IQSEQEKQLMKQYRREEKRIARREKKAGE). In terms of domain architecture, Helicase ATP-binding 1 spans 486 to 669 (ETAYNTNENM…FLHVNPYIGL (184 aa)). 499-506 (APTGAGKT) lines the ATP pocket. Position 572 is an N6-acetyllysine (lysine 572). The DEVH box signature appears at 611–614 (DEVH). Positions 728–914 (TVRTAMSLIE…GTVTNVEEAV (187 aa)) constitute a Helicase C-terminal 1 domain. Residues 978–1287 (STDLGRTASH…GAEAVCIINF (310 aa)) enclose the SEC63 1 domain. The 176-residue stretch at 1336–1511 (HTLYHTDCNV…WLNIKQMGLF (176 aa)) folds into the Helicase ATP-binding 2 domain. 1349–1356 (APTGSGKT) contributes to the ATP binding site. Positions 1453 to 1456 (DEIH) match the DEIH box motif. The 196-residue stretch at 1544-1739 (PAFQAIRSHS…VLSDHLNAEI (196 aa)) folds into the Helicase C-terminal 2 domain. An SEC63 2 domain is found at 1812–2176 (PLTYGRIASY…LGLDQQYDIY (365 aa)). At serine 2195 the chain carries Phosphoserine.

The protein belongs to the helicase family. Identified in the ASCC complex that contains ASCC1, ASCC2 and ASCC3. Functions as scaffolding subunit that interacts directly with both ASCC1 and ASCC2. Interacts directly with ALKBH3, and thereby recruits ALKBH3 to the ASCC complex. Part of the ASC-1/TRIP4 complex, that contains TRIP4, ASCC1, ASCC2 and ASCC3. Part of the RQT (ribosome quality control trigger) complex, that contains ASCC2, ASCC3 and TRIP4. Associates with ribosomes; recruited to collided ribosomes. Interacts with ZCCHC4. Interacts with ZNF598. Interacts with RPS3. Ubiquitous.

The protein resides in the nucleus. It is found in the nucleus speckle. Its subcellular location is the cytoplasm. The protein localises to the cytosol. It catalyses the reaction Couples ATP hydrolysis with the unwinding of duplex DNA by translocating in the 3'-5' direction.. The catalysed reaction is ATP + H2O = ADP + phosphate + H(+). In terms of biological role, ATPase involved both in DNA repair and rescue of stalled ribosomes. 3'-5' DNA helicase involved in repair of alkylated DNA: promotes DNA unwinding to generate single-stranded substrate needed for ALKBH3, enabling ALKBH3 to process alkylated N3-methylcytosine (3mC) within double-stranded regions. Also involved in activation of the ribosome quality control (RQC) pathway, a pathway that degrades nascent peptide chains during problematic translation. Drives the splitting of stalled ribosomes that are ubiquitinated in a ZNF598-dependent manner, as part of the ribosome quality control trigger (RQT) complex. Part of the ASC-1 complex that enhances NF-kappa-B, SRF and AP1 transactivation. In Homo sapiens (Human), this protein is Activating signal cointegrator 1 complex subunit 3 (ASCC3).